Reading from the N-terminus, the 482-residue chain is tRNA sulfurtransferase (482 aa).

A THUMP domain is found at Leu61–Arg165. Residues Leu183–Ile184, Lys265, Gly287, and Gln296 contribute to the ATP site. Cys344 and Cys456 form a disulfide bridge. The Rhodanese domain occupies Phe404–Pro482. Cys456 (cysteine persulfide intermediate) is an active-site residue.

This sequence belongs to the ThiI family.

Its subcellular location is the cytoplasm. It catalyses the reaction [ThiI sulfur-carrier protein]-S-sulfanyl-L-cysteine + a uridine in tRNA + 2 reduced [2Fe-2S]-[ferredoxin] + ATP + H(+) = [ThiI sulfur-carrier protein]-L-cysteine + a 4-thiouridine in tRNA + 2 oxidized [2Fe-2S]-[ferredoxin] + AMP + diphosphate. The catalysed reaction is [ThiS sulfur-carrier protein]-C-terminal Gly-Gly-AMP + S-sulfanyl-L-cysteinyl-[cysteine desulfurase] + AH2 = [ThiS sulfur-carrier protein]-C-terminal-Gly-aminoethanethioate + L-cysteinyl-[cysteine desulfurase] + A + AMP + 2 H(+). It functions in the pathway cofactor biosynthesis; thiamine diphosphate biosynthesis. Its function is as follows. Catalyzes the ATP-dependent transfer of a sulfur to tRNA to produce 4-thiouridine in position 8 of tRNAs, which functions as a near-UV photosensor. Also catalyzes the transfer of sulfur to the sulfur carrier protein ThiS, forming ThiS-thiocarboxylate. This is a step in the synthesis of thiazole, in the thiamine biosynthesis pathway. The sulfur is donated as persulfide by IscS. The protein is tRNA sulfurtransferase of Salmonella typhimurium (strain LT2 / SGSC1412 / ATCC 700720).